The following is a 654-amino-acid chain: Transcription factor E2-alpha (654 aa).

Positions 19–27 (LLDFSMMFP) match the 9aaTAD motif. The interval 31–103 (TNGKGRPASL…LGPGLGGKSG (73 aa)) is disordered. The segment covering 55 to 68 (SSGSWGSGDQSSSS) has biased composition (low complexity). Residues 69-79 (FDPSRTFSEGT) show a composition bias toward polar residues. Residues 84 to 94 (SHSSLSSSTFL) are compositionally biased toward low complexity. Residues S134 and S139 each carry the phosphoserine modification. Disordered stretches follow at residues 135–205 (PGPL…SAKT), 239–268 (MLGGGSSPLPLPPGSGPVGSSGSSSTFGGL), 292–329 (SFSSAPGATYGGVSSHTPPVSGADSLLGSRGTTAGSSG), and 343–385 (DHSS…YDGG). Low complexity predominate over residues 147–156 (SQYYPSYSGS). A Nuclear localization signal motif is present at residues 170–176 (PKKVRKV). Low complexity predominate over residues 256-268 (VGSSGSSSTFGGL). Residues 343-354 (DHSSNNFSSSPS) are compositionally biased toward low complexity. T355 is subject to Phosphothreonine. At S359 the chain carries Phosphoserine. Omega-N-methylarginine is present on R371. A Phosphoserine modification is found at S379. The leucine-zipper stretch occupies residues 389 to 425 (LQSKIEDHLDEAIHVLRSHAVGTAGDMHTLLPGHGAL). The interval 461–552 (NHAALPSQPG…KAEREKERRV (92 aa)) is disordered. Residue K498 forms a Glycyl lysine isopeptide (Lys-Gly) (interchain with G-Cter in SUMO2) linkage. Residues 512–523 (DHSEEEKKELKA) are compositionally biased toward basic and acidic residues. A Phosphoserine modification is found at S529. Position 531 is a phosphothreonine (D531). Basic and acidic residues predominate over residues 542-552 (QKAEREKERRV). Residues 549-602 (ERRVANNARERLRVRDINEAFKELGRMCQLHLNSEKPQTKLLILHQAVSVILNL) enclose the bHLH domain. K625 participates in a covalent cross-link: Glycyl lysine isopeptide (Lys-Gly) (interchain with G-Cter in SUMO2). A disordered region spans residues 633-654 (PQMVLSAPHPGLSEAHNPAGHM).

Homodimer. Heterodimer; efficient DNA binding requires dimerization with another bHLH protein. Forms a heterodimer with ASH1, TWIST1 and TWIST2. Forms a heterodimer with MYOG; heterodimerization enhances MYOG DNA-binding and transcriptional activities. Forms a heterodimer with NEUROD1; the heterodimer is inhibited in presence of ID2, but not NR0B2, to E-box element. Forms a heterodimer with TCF15; the heterodimer binds E-box element. Forms a heterodimer with ATOH8; repress transcription of TCF3 and TCF3/NEUROG3 dimer-induced transactivation of E box-dependent promoters. Component of a nuclear TAL-1 complex composed at least of CBFA2T3, LDB1, TAL1 and TCF3. Interacts with NEUROD2, PTF1A and TGFB1I1. Interacts with EP300 and UBE2I. Interacts with BHLHA9. Interacts with ASB2; the interaction is mediated by SKP2 and targets TCF3 for Notch-induced proteasomal degradation. As to quaternary structure, forms a heterodimer with ATOH7; required for ATOH7 DNA-binding. In terms of assembly, interacts with RALGAPA1 and FIGLA. Phosphorylated following NGF stimulation. Post-translationally, undergoes Notch-induced ubiquitination and subsequent proteasomal degradation which is mediated by ASB1 or ASB2, the substrate-recognition components of probable ECS E3 ubiquitin-protein ligase complexes.

It localises to the nucleus. In terms of biological role, transcriptional regulator involved in the initiation of neuronal differentiation and mesenchymal to epithelial transition. Heterodimers between TCF3 and tissue-specific basic helix-loop-helix (bHLH) proteins play major roles in determining tissue-specific cell fate during embryogenesis, like muscle or early B-cell differentiation. Together with TCF15, required for the mesenchymal to epithelial transition. Dimers bind DNA on E-box motifs: 5'-CANNTG-3'. Binds to the kappa-E2 site in the kappa immunoglobulin gene enhancer. Binds to IEB1 and IEB2, which are short DNA sequences in the insulin gene transcription control region. Its function is as follows. Facilitates ATOH7 binding to DNA at the consensus sequence 5'-CAGGTG-3', and positively regulates transcriptional activity. The protein is Transcription factor E2-alpha (TCF3) of Homo sapiens (Human).